A 1037-amino-acid chain; its full sequence is Multidrug resistance protein MdtF (1037 aa).

Residues 1 to 9 (MANYFIDRP) lie on the Cytoplasmic side of the membrane. A helical membrane pass occupies residues 10–30 (VFAWVLAIIMMLAGGLAIMNL). Topologically, residues 31-338 (PVAQYPQIAP…TTPFIEISIQ (308 aa)) are periplasmic. A helical membrane pass occupies residues 339 to 359 (EVFKTLVEAIILVFLVMYLFL). Topologically, residues 360–369 (QNFRATIIPT) are cytoplasmic. The chain crosses the membrane as a helical span at residues 370-390 (IAVPVVILGTFAILSAVGFTI). At 391–392 (NT) the chain is on the periplasmic side. Residues 393–413 (LTMFGMVLAIGLLVDDAIVVV) traverse the membrane as a helical segment. At 414 to 441 (ENVERVIAEDKLPPKEATHKSMGQIQRA) the chain is on the cytoplasmic side. Residues 442-462 (LVGIAVVLSAVFMPMAFMSGA) traverse the membrane as a helical segment. Topologically, residues 463 to 471 (TGEIYRQFS) are periplasmic. The chain crosses the membrane as a helical span at residues 472–492 (ITLISSMLLSVFVAMSLTPAL). Over 493-534 (CATILKAAPEGGHKPNALFARFNTLFEKSTQHYTDSTRSLLR) the chain is Cytoplasmic. The helical transmembrane segment at 535-555 (CTGRYMVIYLLICAGMAVLFL) threads the bilayer. At 556–870 (RTPTSFLPEE…SYQEALSSNQ (315 aa)) the chain is on the periplasmic side. Residues 871 to 891 (APALYAISLVVVFLALAALYE) form a helical membrane-spanning segment. Residue Ser-892 is a topological domain, cytoplasmic. A helical membrane pass occupies residues 893 to 913 (WSIPFSVMLVVPLGVVGALLA). The Periplasmic segment spans residues 914-927 (TDLRGLSNDVYFQV). Residues 928–948 (GLLTTIGLSAKNAILIVEFAV) traverse the membrane as a helical segment. The Cytoplasmic portion of the chain corresponds to 949–972 (EMMQKEGKTPIEAIIEAARMRLRP). Residues 973 to 993 (ILMTSLAFILGVLPLVISHGA) form a helical membrane-spanning segment. Residues 994 to 1006 (GSGAQNAVGTGVM) lie on the Periplasmic side of the membrane. Residues 1007-1027 (GGMFAATVLAIYFVPVFFVVV) traverse the membrane as a helical segment. At 1028 to 1037 (EHLFARFKKA) the chain is on the cytoplasmic side.

It belongs to the resistance-nodulation-cell division (RND) (TC 2.A.6) family. As to quaternary structure, homotrimer. Part of the tripartite efflux system MdtEF-TolC, which is composed of an inner membrane transporter, MdtF, a membrane fusion protein, MdtE, and an outer membrane component, TolC. The complex forms a large protein conduit and can translocate molecules across both the inner and outer membranes.

The protein localises to the cell inner membrane. In terms of biological role, part of the tripartite efflux system MdtEF-TolC, which confers resistance to various compounds. This Escherichia coli O157:H7 protein is Multidrug resistance protein MdtF (mdtF).